A 229-amino-acid polypeptide reads, in one-letter code: Potassium/proton antiporter CemA (229 aa).

3 helical membrane passes run 7–27, 107–127, and 189–209; these read FTPLFYLASIVFLPWWISFSV, ILHFSTNIICFIILSGYSILG, and IISGLVSTFPVILDTIFKYWI.

The protein belongs to the CemA family.

The protein resides in the plastid. It is found in the chloroplast inner membrane. The catalysed reaction is K(+)(in) + H(+)(out) = K(+)(out) + H(+)(in). Contributes to K(+)/H(+) antiport activity by supporting proton efflux to control proton extrusion and homeostasis in chloroplasts in a light-dependent manner to modulate photosynthesis. Prevents excessive induction of non-photochemical quenching (NPQ) under continuous-light conditions. Indirectly promotes efficient inorganic carbon uptake into chloroplasts. The chain is Potassium/proton antiporter CemA from Nicotiana sylvestris (Wood tobacco).